Consider the following 518-residue polypeptide: Triacylglycerol lipase OBL1 (518 aa).

The helical transmembrane segment at 93 to 113 (GFVVDFFLNLFSANGGFFGLL) threads the bilayer. The GXSXG motif lies at 337–341 (GHSLG). The active-site Nucleophile is Ser-339. Residues Asp-403 and His-496 each act as charge relay system in the active site.

It belongs to the AB hydrolase superfamily. Lipase family. As to expression, expressed in pollen grains, pollen tubes, developing embryos, developing seeds and germinating seeds.

The protein resides in the lipid droplet. It localises to the membrane. It catalyses the reaction 1,2-di-(9Z-octadecenoyl)-glycerol + (9Z)-octadecenoate + H(+) = 1,2,3-tri-(9Z-octadecenoyl)-glycerol + H2O. It carries out the reaction 1-(9Z-octadecenoyl)-glycerol + H2O = glycerol + (9Z)-octadecenoate + H(+). In terms of biological role, acid lipase that can hydrolyze a range of triacylglycerols without a clear preference for acyl-chains. Can also cleave 1,2-diacylglycerol, 1,3-diacylglycerol and 1-monoacylglycerol, but not phosphatidylcholine, phosphatidylethanolamine, or sterol esters. Required for pollen tube growth. Triacylglycerol hydrolysis by OBL1 may provide acyl groups for the synthesis of membrane lipids in growing pollen tubes. The polypeptide is Triacylglycerol lipase OBL1 (Arabidopsis thaliana (Mouse-ear cress)).